Here is a 298-residue protein sequence, read N- to C-terminus: Ribosomal protein L11 methyltransferase (298 aa).

Positions 152, 173, 195, and 234 each coordinate S-adenosyl-L-methionine.

The protein belongs to the methyltransferase superfamily. PrmA family.

It is found in the cytoplasm. The catalysed reaction is L-lysyl-[protein] + 3 S-adenosyl-L-methionine = N(6),N(6),N(6)-trimethyl-L-lysyl-[protein] + 3 S-adenosyl-L-homocysteine + 3 H(+). Methylates ribosomal protein L11. This is Ribosomal protein L11 methyltransferase from Ralstonia pickettii (strain 12J).